Consider the following 534-residue polypeptide: Multicopper oxidase LPR1 homolog 3 (534 aa).

Residues histidine 84 and histidine 86 each contribute to the Cu cation site. N-linked (GlcNAc...) asparagine glycosylation is present at asparagine 109. The Cu cation site is built by histidine 133 and histidine 135. The 73-residue stretch at 219 to 291 folds into the Plastocyanin-like domain; that stretch reads PFQAVQRRRY…VDFSLVVNPN (73 aa). Residues asparagine 234, asparagine 291, asparagine 312, asparagine 323, asparagine 341, and asparagine 372 are each glycosylated (N-linked (GlcNAc...) asparagine). Cu cation-binding residues include histidine 419, histidine 422, and histidine 424. N-linked (GlcNAc...) asparagine glycosylation occurs at asparagine 450. Residues histidine 515, cysteine 516, histidine 517, histidine 521, and methionine 526 each coordinate Cu cation.

This sequence belongs to the multicopper oxidase family. Cu cation is required as a cofactor. In terms of tissue distribution, expressed in roots and basal stems.

The protein resides in the endoplasmic reticulum membrane. In terms of biological role, multicopper oxidase that may play a role in the maintenance of inorganic phosphate homeostasis. The chain is Multicopper oxidase LPR1 homolog 3 from Oryza sativa subsp. japonica (Rice).